The primary structure comprises 154 residues: Myoglobin (154 aa).

In terms of domain architecture, Globin spans 2–148 (GLSDGEWQLV…FRNDMAAQYK (147 aa)). At S4 the chain carries Phosphoserine. A nitrite-binding site is contributed by H65. H65 is a binding site for O2. T68 carries the post-translational modification Phosphothreonine. H94 is a binding site for heme b.

The protein belongs to the globin family. As to quaternary structure, monomeric.

The protein resides in the cytoplasm. The protein localises to the sarcoplasm. The enzyme catalyses Fe(III)-heme b-[protein] + nitric oxide + H2O = Fe(II)-heme b-[protein] + nitrite + 2 H(+). It carries out the reaction H2O2 + AH2 = A + 2 H2O. Functionally, monomeric heme protein which primary function is to store oxygen and facilitate its diffusion within muscle tissues. Reversibly binds oxygen through a pentacoordinated heme iron and enables its timely and efficient release as needed during periods of heightened demand. Depending on the oxidative conditions of tissues and cells, and in addition to its ability to bind oxygen, it also has a nitrite reductase activity whereby it regulates the production of bioactive nitric oxide. Under stress conditions, like hypoxia and anoxia, it also protects cells against reactive oxygen species thanks to its pseudoperoxidase activity. The polypeptide is Myoglobin (MB) (Cervus elaphus (Red deer)).